The following is a 121-amino-acid chain: MARISGIDIPREKRVEVALTYIYGIGLTRAQSILEKSGVNPDIRVKDLEDSDIQKLRAVTEEFTLEGDLRRQEGMALKRLQDIGCVRGRRHRMSLPVRGQRTRTNARTRRGARKTVAGRKK.

Residues 97 to 121 are disordered; it reads VRGQRTRTNARTRRGARKTVAGRKK. The span at 100–121 shows a compositional bias: basic residues; sequence QRTRTNARTRRGARKTVAGRKK.

This sequence belongs to the universal ribosomal protein uS13 family. As to quaternary structure, part of the 30S ribosomal subunit. Forms a loose heterodimer with protein S19. Forms two bridges to the 50S subunit in the 70S ribosome.

Its function is as follows. Located at the top of the head of the 30S subunit, it contacts several helices of the 16S rRNA. In the 70S ribosome it contacts the 23S rRNA (bridge B1a) and protein L5 of the 50S subunit (bridge B1b), connecting the 2 subunits; these bridges are implicated in subunit movement. Contacts the tRNAs in the A and P-sites. The chain is Small ribosomal subunit protein uS13 from Prochlorococcus marinus (strain NATL2A).